Reading from the N-terminus, the 153-residue chain is Transcriptional repressor NrdR (153 aa).

Residues 1-20 (MKCPFCNSADTRVKNSRHSD) form a disordered region. A zinc finger spans residues 3–34 (CPFCNSADTRVKNSRHSDDNMSVRRRRLCEVC). Residues 11-20 (TRVKNSRHSD) show a composition bias toward basic and acidic residues. The region spanning 49–139 (IMVLKKDGRM…VYMDFSDADD (91 aa)) is the ATP-cone domain.

Belongs to the NrdR family. It depends on Zn(2+) as a cofactor.

In terms of biological role, negatively regulates transcription of bacterial ribonucleotide reductase nrd genes and operons by binding to NrdR-boxes. The protein is Transcriptional repressor NrdR of Anaplasma phagocytophilum (strain HZ).